A 1374-amino-acid polypeptide reads, in one-letter code: DNA-directed RNA polymerase subunit beta (1374 aa).

The protein belongs to the RNA polymerase beta chain family. The RNAP catalytic core consists of 2 alpha, 1 beta, 1 beta' and 1 omega subunit. When a sigma factor is associated with the core the holoenzyme is formed, which can initiate transcription.

The catalysed reaction is RNA(n) + a ribonucleoside 5'-triphosphate = RNA(n+1) + diphosphate. Functionally, DNA-dependent RNA polymerase catalyzes the transcription of DNA into RNA using the four ribonucleoside triphosphates as substrates. In Rhodopseudomonas palustris (strain BisB5), this protein is DNA-directed RNA polymerase subunit beta.